The following is a 325-amino-acid chain: Tetraacyldisaccharide 4'-kinase (325 aa).

54 to 61 (SVGGTGKT) serves as a coordination point for ATP.

This sequence belongs to the LpxK family.

The enzyme catalyses a lipid A disaccharide + ATP = a lipid IVA + ADP + H(+). It functions in the pathway glycolipid biosynthesis; lipid IV(A) biosynthesis; lipid IV(A) from (3R)-3-hydroxytetradecanoyl-[acyl-carrier-protein] and UDP-N-acetyl-alpha-D-glucosamine: step 6/6. Functionally, transfers the gamma-phosphate of ATP to the 4'-position of a tetraacyldisaccharide 1-phosphate intermediate (termed DS-1-P) to form tetraacyldisaccharide 1,4'-bis-phosphate (lipid IVA). The sequence is that of Tetraacyldisaccharide 4'-kinase from Rickettsia felis (strain ATCC VR-1525 / URRWXCal2) (Rickettsia azadi).